The following is a 325-amino-acid chain: Acetyl-coenzyme A carboxylase carboxyl transferase subunit alpha (325 aa).

One can recognise a CoA carboxyltransferase C-terminal domain in the interval 38 to 292 (KLEKRLHALE…DQVLEKSLKQ (255 aa)).

It belongs to the AccA family. In terms of assembly, acetyl-CoA carboxylase is a heterohexamer composed of biotin carboxyl carrier protein (AccB), biotin carboxylase (AccC) and two subunits each of ACCase subunit alpha (AccA) and ACCase subunit beta (AccD).

The protein localises to the cytoplasm. The enzyme catalyses N(6)-carboxybiotinyl-L-lysyl-[protein] + acetyl-CoA = N(6)-biotinyl-L-lysyl-[protein] + malonyl-CoA. It functions in the pathway lipid metabolism; malonyl-CoA biosynthesis; malonyl-CoA from acetyl-CoA: step 1/1. In terms of biological role, component of the acetyl coenzyme A carboxylase (ACC) complex. First, biotin carboxylase catalyzes the carboxylation of biotin on its carrier protein (BCCP) and then the CO(2) group is transferred by the carboxyltransferase to acetyl-CoA to form malonyl-CoA. This chain is Acetyl-coenzyme A carboxylase carboxyl transferase subunit alpha, found in Halalkalibacterium halodurans (strain ATCC BAA-125 / DSM 18197 / FERM 7344 / JCM 9153 / C-125) (Bacillus halodurans).